The chain runs to 30 residues: Rothein 3.1 (30 aa).

Leucine amide is present on Leu30.

Expressed by the skin dorsal glands.

It is found in the secreted. In terms of biological role, lacks antimicrobial activity. Does not inhibit the formation of NO by neuronal nitric oxide. This is Rothein 3.1 from Litoria rothii (Roth's tree frog).